Here is a 762-residue protein sequence, read N- to C-terminus: Endonuclease MutS2 (762 aa).

G329–T336 provides a ligand contact to ATP. In terms of domain architecture, Smr spans L682–E757.

Belongs to the DNA mismatch repair MutS family. MutS2 subfamily. In terms of assembly, homodimer. Binds to stalled ribosomes, contacting rRNA.

Its function is as follows. Endonuclease that is involved in the suppression of homologous recombination and thus may have a key role in the control of bacterial genetic diversity. Acts as a ribosome collision sensor, splitting the ribosome into its 2 subunits. Detects stalled/collided 70S ribosomes which it binds and splits by an ATP-hydrolysis driven conformational change. Acts upstream of the ribosome quality control system (RQC), a ribosome-associated complex that mediates the extraction of incompletely synthesized nascent chains from stalled ribosomes and their subsequent degradation. Probably generates substrates for RQC. This is Endonuclease MutS2 from Aquifex aeolicus (strain VF5).